We begin with the raw amino-acid sequence, 339 residues long: Probable cytosolic iron-sulfur protein assembly protein CIAO1 (339 aa).

7 WD repeats span residues 14–53 (HPDS…WICK), 59–98 (GHQR…FECV), 103–142 (GHEN…EYEC), 148–187 (SHTQ…WVCC), 192–231 (GHES…NEQG), 250–289 (FHSR…DPQQ), and 301–339 (AHSQ…SEGI). An LYR motif; required for interaction with HSC20 motif is present at residues 176–178 (LYR).

The protein belongs to the WD repeat CIA1 family. In terms of assembly, component of the CIA complex. Interacts with CIAO2A and forms a complex with CIAO2B and MMS19; the interactions with CIAO2A and CIAO2B are mutually exclusive. Interacts with CHD1L, ERCC2, IREB2 and POLD1. Component of the MMXD complex, which includes CIAO1, ERCC2, CIAO2B, MMS19 and SLC25A5. Interacts with WT1. Interacts with CIAO3. Interacts (via LYR motif) with HSC20.

It localises to the cytoplasm. Its function is as follows. Key component of the cytosolic iron-sulfur protein assembly (CIA) complex, a multiprotein complex that mediates the incorporation of iron-sulfur cluster into extramitochondrial Fe/S proteins. As a CIA complex component, interacts specifically with CIAO2A or CIAO2B and MMS19 to assist different branches of iron-sulfur protein assembly, depending of its interactors. The complex CIAO1:CIAO2B:MMS19 binds to and facilitates the assembly of most cytosolic-nuclear Fe/S proteins. CIAO1:CIAO2A specifically matures ACO1 and stabilizes IREB2. Seems to specifically modulate the transactivation activity of WT1. As part of the mitotic spindle-associated MMXD complex it may play a role in chromosome segregation. This chain is Probable cytosolic iron-sulfur protein assembly protein CIAO1, found in Bos taurus (Bovine).